Here is a 102-residue protein sequence, read N- to C-terminus: Small ribosomal subunit protein uS10 (102 aa).

Belongs to the universal ribosomal protein uS10 family. In terms of assembly, part of the 30S ribosomal subunit.

Functionally, involved in the binding of tRNA to the ribosomes. The sequence is that of Small ribosomal subunit protein uS10 from Dehalococcoides mccartyi (strain ATCC BAA-2266 / KCTC 15142 / 195) (Dehalococcoides ethenogenes (strain 195)).